The sequence spans 346 residues: UDP-3-O-acylglucosamine N-acyltransferase (346 aa).

Histidine 253 serves as the catalytic Proton acceptor.

This sequence belongs to the transferase hexapeptide repeat family. LpxD subfamily. Homotrimer.

The catalysed reaction is a UDP-3-O-[(3R)-3-hydroxyacyl]-alpha-D-glucosamine + a (3R)-hydroxyacyl-[ACP] = a UDP-2-N,3-O-bis[(3R)-3-hydroxyacyl]-alpha-D-glucosamine + holo-[ACP] + H(+). The protein operates within bacterial outer membrane biogenesis; LPS lipid A biosynthesis. Functionally, catalyzes the N-acylation of UDP-3-O-acylglucosamine using 3-hydroxyacyl-ACP as the acyl donor. Is involved in the biosynthesis of lipid A, a phosphorylated glycolipid that anchors the lipopolysaccharide to the outer membrane of the cell. In Rickettsia akari (strain Hartford), this protein is UDP-3-O-acylglucosamine N-acyltransferase.